We begin with the raw amino-acid sequence, 209 residues long: uncharacterized protein (209 aa).

A disordered region spans residues 177 to 209; sequence DNSDNSSDSDDSDSLDGSDDLNDSDNVDNLFVG. Positions 183–202 are enriched in acidic residues; sequence SDSDDSDSLDGSDDLNDSDN.

This is an uncharacterized protein from Acanthamoeba polyphaga (Amoeba).